The primary structure comprises 432 residues: D-amino acid dehydrogenase (432 aa).

3-17 (VVILGSGVVGVTSAW) is an FAD binding site.

This sequence belongs to the DadA oxidoreductase family. The cofactor is FAD.

It catalyses the reaction a D-alpha-amino acid + A + H2O = a 2-oxocarboxylate + AH2 + NH4(+). It participates in amino-acid degradation; D-alanine degradation; NH(3) and pyruvate from D-alanine: step 1/1. Its function is as follows. Oxidative deamination of D-amino acids. In Escherichia fergusonii (strain ATCC 35469 / DSM 13698 / CCUG 18766 / IAM 14443 / JCM 21226 / LMG 7866 / NBRC 102419 / NCTC 12128 / CDC 0568-73), this protein is D-amino acid dehydrogenase.